Consider the following 41-residue polypeptide: Photosystem II reaction center protein L (41 aa).

Residues 20-40 (SLYWGLLLIFVLAVPFSNYFF) form a helical membrane-spanning segment.

Belongs to the PsbL family. PSII is composed of 1 copy each of membrane proteins PsbA, PsbB, PsbC, PsbD, PsbE, PsbF, PsbH, PsbI, PsbJ, PsbK, PsbL, PsbM, PsbT, PsbX, PsbY, PsbZ, Psb30/Ycf12, at least 3 peripheral proteins of the oxygen-evolving complex and a large number of cofactors. It forms dimeric complexes.

It is found in the plastid. It localises to the chloroplast thylakoid membrane. In terms of biological role, one of the components of the core complex of photosystem II (PSII). PSII is a light-driven water:plastoquinone oxidoreductase that uses light energy to abstract electrons from H(2)O, generating O(2) and a proton gradient subsequently used for ATP formation. It consists of a core antenna complex that captures photons, and an electron transfer chain that converts photonic excitation into a charge separation. This subunit is found at the monomer-monomer interface and is required for correct PSII assembly and/or dimerization. In Pinus koraiensis (Korean pine), this protein is Photosystem II reaction center protein L.